A 416-amino-acid polypeptide reads, in one-letter code: MSLSNKLSVKDLDVSGKRVFIRVDFNVPLDGKTITNNQRIVAALPTIKYVLENKPKAVILASHLGRPNGEKVDKFSLAPVASELEKLLGKKVNFLDDCVGDNVEKAVNGGSDGEVFLLENLRFHIEEEGSQKKDGEKVKASGEDVKKFRQQLTNLADVYVNDAFGTAHRAHSSMVGLELPQKAAGFLMAKELEYFAKALENPVRPFLAILGGAKVSDKIQLIDNLLDKVDLLIVGGGMSFTFKKVLDNMPIGDSLFDEAGAKNVENLVAKAKKNNVKIVLPVDFITADKFDKDAKTSTATEDEGIPDNWMGLDAGPKSNELFAKTVAEAKTIVWNGPPGVFEFDNFAKGTKSLLDAAVKSAESGNTVIIGGGDTATVAKKYGVVDKLSHVSTGGGASLELLEGKELPGVVAISDKK.

Residues valine 23, aspartate 24, phenylalanine 25, asparagine 26, glutamine 38, arginine 39, serine 62, histidine 63, glycine 65, arginine 66, leucine 121, arginine 122, histidine 168, and arginine 169 each coordinate (2R)-3-phosphoglycerate. Glycine 212 serves as a coordination point for ADP. Glycine 212 is a CDP binding site. 2 residues coordinate AMP: alanine 213 and lysine 214. Alanine 213 contributes to the ATP binding site. A Mg(2+)-binding site is contributed by alanine 213. Residue aspartate 217 coordinates CDP. Residue aspartate 217 coordinates Mg(2+). Lysine 218 contributes to the AMP binding site. Lysine 218 contacts ATP. Glycine 236 contacts ADP. Glycine 236 serves as a coordination point for CDP. Glycine 237 and glycine 311 together coordinate AMP. ATP contacts are provided by glycine 237 and glycine 311. Residues glycine 336 and phenylalanine 341 each contribute to the CDP site. Phenylalanine 341 contacts ADP. Glutamate 342 serves as a coordination point for AMP. 3 residues coordinate ATP: glutamate 342, aspartate 373, and threonine 374. Position 373 (aspartate 373) interacts with Mg(2+).

This sequence belongs to the phosphoglycerate kinase family. Monomer. The cofactor is Mg(2+).

It is found in the cytoplasm. Its subcellular location is the mitochondrion. The enzyme catalyses (2R)-3-phosphoglycerate + ATP = (2R)-3-phospho-glyceroyl phosphate + ADP. It participates in carbohydrate degradation; glycolysis; pyruvate from D-glyceraldehyde 3-phosphate: step 2/5. In terms of biological role, catalyzes one of the two ATP producing reactions in the glycolytic pathway via the reversible conversion of 1,3-diphosphoglycerate to 3-phosphoglycerate. Both L- and D- forms of purine and pyrimidine nucleotides can be used as substrates, but the activity is much lower on pyrimidines. Negatively regulates the biosynthesis of acetyl-CoA from pyruvate in the mitochondrion. The polypeptide is Phosphoglycerate kinase (PGK1) (Debaryomyces hansenii (strain ATCC 36239 / CBS 767 / BCRC 21394 / JCM 1990 / NBRC 0083 / IGC 2968) (Yeast)).